The primary structure comprises 304 residues: Non-specific ribonucleoside hydrolase RihC (304 aa).

H233 is an active-site residue.

Belongs to the IUNH family. RihC subfamily.

Hydrolyzes both purine and pyrimidine ribonucleosides with a broad-substrate specificity. This chain is Non-specific ribonucleoside hydrolase RihC, found in Shigella boydii serotype 4 (strain Sb227).